We begin with the raw amino-acid sequence, 83 residues long: High-potential iron-sulfur protein (83 aa).

Residues Cys43, Cys46, Cys61, and Cys75 each coordinate [4Fe-4S] cluster.

This sequence belongs to the high-potential iron-sulfur protein (HiPIP) family. As to quaternary structure, homodimer.

The protein resides in the periplasm. Specific class of high-redox-potential 4Fe-4S ferredoxins. Functions in anaerobic electron transport in most purple and in some other photosynthetic bacteria and in at least one genus (Paracoccus) of halophilic, denitrifying bacteria. In Marichromatium gracile (Chromatium gracile), this protein is High-potential iron-sulfur protein (hip).